A 220-amino-acid polypeptide reads, in one-letter code: Deoxyribose-phosphate aldolase 2 (220 aa).

Catalysis depends on Asp-89, which acts as the Proton donor/acceptor. The Schiff-base intermediate with acetaldehyde role is filled by Lys-151. Lys-180 serves as the catalytic Proton donor/acceptor.

The protein belongs to the DeoC/FbaB aldolase family. DeoC type 1 subfamily.

It localises to the cytoplasm. The enzyme catalyses 2-deoxy-D-ribose 5-phosphate = D-glyceraldehyde 3-phosphate + acetaldehyde. It participates in carbohydrate degradation; 2-deoxy-D-ribose 1-phosphate degradation; D-glyceraldehyde 3-phosphate and acetaldehyde from 2-deoxy-alpha-D-ribose 1-phosphate: step 2/2. Catalyzes a reversible aldol reaction between acetaldehyde and D-glyceraldehyde 3-phosphate to generate 2-deoxy-D-ribose 5-phosphate. The chain is Deoxyribose-phosphate aldolase 2 from Staphylococcus aureus (strain MSSA476).